The following is a 476-amino-acid chain: ATP synthase subunit beta (476 aa).

157–164 is a binding site for ATP; that stretch reads GGAGVGKT.

The protein belongs to the ATPase alpha/beta chains family. F-type ATPases have 2 components, CF(1) - the catalytic core - and CF(0) - the membrane proton channel. CF(1) has five subunits: alpha(3), beta(3), gamma(1), delta(1), epsilon(1). CF(0) has three main subunits: a(1), b(2) and c(9-12). The alpha and beta chains form an alternating ring which encloses part of the gamma chain. CF(1) is attached to CF(0) by a central stalk formed by the gamma and epsilon chains, while a peripheral stalk is formed by the delta and b chains.

The protein resides in the cell membrane. The enzyme catalyses ATP + H2O + 4 H(+)(in) = ADP + phosphate + 5 H(+)(out). Its function is as follows. Produces ATP from ADP in the presence of a proton gradient across the membrane. The catalytic sites are hosted primarily by the beta subunits. The protein is ATP synthase subunit beta of Mycoplasma genitalium (strain ATCC 33530 / DSM 19775 / NCTC 10195 / G37) (Mycoplasmoides genitalium).